The primary structure comprises 382 residues: Galactose-1-phosphate uridylyltransferase (382 aa).

C52 and C55 together coordinate Zn(2+). UDP-alpha-D-glucose-binding positions include A61 and 77–78; that span reads ND. H121 is a Zn(2+) binding site. N185 lines the UDP-alpha-D-glucose pocket. Position 196 (H196) interacts with Zn(2+). Catalysis depends on H198, which acts as the Tele-UMP-histidine intermediate. Position 200 (Q200) interacts with UDP-alpha-D-glucose. Residues E214, H313, H330, and H332 each coordinate Fe cation. Residues 345–348 and 350–351 each bind UDP-alpha-D-glucose; these read KFLV and FE.

Belongs to the galactose-1-phosphate uridylyltransferase type 1 family. In terms of assembly, homodimer. The cofactor is Zn(2+).

It catalyses the reaction alpha-D-galactose 1-phosphate + UDP-alpha-D-glucose = alpha-D-glucose 1-phosphate + UDP-alpha-D-galactose. It participates in carbohydrate metabolism; galactose metabolism. In terms of biological role, essential for growth on galactose but not for cellulase induction. In Hypocrea jecorina (Trichoderma reesei), this protein is Galactose-1-phosphate uridylyltransferase (gal7).